The following is a 102-amino-acid chain: NADH-quinone oxidoreductase subunit K (102 aa).

3 helical membrane passes run 5 to 25, 31 to 51, and 65 to 85; these read LSHY…GIFL, IVIL…MVAF, and LFIL…LVVF.

Belongs to the complex I subunit 4L family. In terms of assembly, NDH-1 is composed of 14 different subunits. Subunits NuoA, H, J, K, L, M, N constitute the membrane sector of the complex.

It localises to the cell inner membrane. It catalyses the reaction a quinone + NADH + 5 H(+)(in) = a quinol + NAD(+) + 4 H(+)(out). Its function is as follows. NDH-1 shuttles electrons from NADH, via FMN and iron-sulfur (Fe-S) centers, to quinones in the respiratory chain. The immediate electron acceptor for the enzyme in this species is believed to be ubiquinone. Couples the redox reaction to proton translocation (for every two electrons transferred, four hydrogen ions are translocated across the cytoplasmic membrane), and thus conserves the redox energy in a proton gradient. The chain is NADH-quinone oxidoreductase subunit K from Rhizobium leguminosarum bv. trifolii (strain WSM2304).